The following is a 384-amino-acid chain: Cell adhesion molecule CEACAM18 (384 aa).

A signal peptide spans 1–30; it reads MDLSRPRWSLWRRVFLMASLLACGICQASG. N-linked (GlcNAc...) asparagine glycans are attached at residues N108, N112, N121, N162, and N270. The region spanning 227–314 is the Ig-like C2-type domain; it reads PDYVLLRSNP…LIMYMDVRIQ (88 aa). A disulfide bridge links C255 with C296. Residues 358 to 384 are disordered; the sequence is QPLLNQDKSGSMSVHPRPEDKTRRASR. Over residues 359 to 369 the composition is skewed to polar residues; that stretch reads PLLNQDKSGSM. Residues 373-384 are compositionally biased toward basic and acidic residues; that stretch reads PRPEDKTRRASR.

The protein belongs to the immunoglobulin superfamily. CEA family.

This Homo sapiens (Human) protein is Cell adhesion molecule CEACAM18.